A 107-amino-acid polypeptide reads, in one-letter code: Nucleoid-associated protein BMEA_A0033 (107 aa).

This sequence belongs to the YbaB/EbfC family. In terms of assembly, homodimer.

The protein resides in the cytoplasm. Its subcellular location is the nucleoid. In terms of biological role, binds to DNA and alters its conformation. May be involved in regulation of gene expression, nucleoid organization and DNA protection. The chain is Nucleoid-associated protein BMEA_A0033 from Brucella melitensis biotype 2 (strain ATCC 23457).